The chain runs to 345 residues: L-threonine 3-dehydrogenase (345 aa).

Cysteine 42 provides a ligand contact to Zn(2+). Active-site charge relay system residues include threonine 44 and histidine 47. Zn(2+)-binding residues include histidine 67, glutamate 68, cysteine 97, cysteine 100, cysteine 103, and cysteine 111. Residues isoleucine 179, aspartate 199, arginine 204, 266–268, and 290–291 each bind NAD(+); these read LGI and IY.

This sequence belongs to the zinc-containing alcohol dehydrogenase family. In terms of assembly, homotetramer. Zn(2+) serves as cofactor.

Its subcellular location is the cytoplasm. It catalyses the reaction L-threonine + NAD(+) = (2S)-2-amino-3-oxobutanoate + NADH + H(+). The protein operates within amino-acid degradation; L-threonine degradation via oxydo-reductase pathway; glycine from L-threonine: step 1/2. In terms of biological role, catalyzes the NAD(+)-dependent oxidation of L-threonine to 2-amino-3-ketobutyrate. The polypeptide is L-threonine 3-dehydrogenase (Rhizobium rhizogenes (strain K84 / ATCC BAA-868) (Agrobacterium radiobacter)).